A 392-amino-acid chain; its full sequence is FK506-binding protein 4 (392 aa).

Disordered stretches follow at residues Asn58 to Asp116 and Gly161 to Lys284. 3 stretches are compositionally biased toward acidic residues: residues Asp73–Ala86, Ser104–Asp116, and Ser172–Asp219. A phosphoserine mark is found at Ser80 and Ser82. Composition is skewed to basic and acidic residues over residues Ile220–Lys234 and Ser252–Pro279. The PPIase FKBP-type domain maps to Gly306–Lys392.

The protein belongs to the FKBP-type PPIase family. FKBP3/4 subfamily. In terms of assembly, binds to histones H3 and H4. Interacts with NOP53.

It localises to the nucleus. The catalysed reaction is [protein]-peptidylproline (omega=180) = [protein]-peptidylproline (omega=0). In terms of biological role, PPIase that acts as a histone chaperone. Histone proline isomerase that increases the rate of cis-trans isomerization at 'Pro-17' (H3P16), 'Pro-31' (H3P30) and 'Pro-39 (H3P38) on the histone H3 N-terminal tail. H3P16 and H3P30 are the major proline targets with little activity shown against H3P38. H3P38 isomerization influences SET2-mediated H3K36 methylation thereby regulating gene expression. This is FK506-binding protein 4 from Saccharomyces cerevisiae (strain ATCC 204508 / S288c) (Baker's yeast).